A 163-amino-acid polypeptide reads, in one-letter code: Lipoprotein signal peptidase (163 aa).

3 helical membrane passes run Leu7 to Val27, Trp64 to Leu84, and Ala99 to Val119. Residues Asp120 and Asp138 contribute to the active site. A helical transmembrane segment spans residues Val133–Phe153.

This sequence belongs to the peptidase A8 family.

It is found in the cell inner membrane. It carries out the reaction Release of signal peptides from bacterial membrane prolipoproteins. Hydrolyzes -Xaa-Yaa-Zaa-|-(S,diacylglyceryl)Cys-, in which Xaa is hydrophobic (preferably Leu), and Yaa (Ala or Ser) and Zaa (Gly or Ala) have small, neutral side chains.. It participates in protein modification; lipoprotein biosynthesis (signal peptide cleavage). In terms of biological role, this protein specifically catalyzes the removal of signal peptides from prolipoproteins. This chain is Lipoprotein signal peptidase, found in Actinobacillus succinogenes (strain ATCC 55618 / DSM 22257 / CCUG 43843 / 130Z).